The primary structure comprises 331 residues: Quinone oxidoreductase (331 aa).

A2 bears the N-acetylalanine mark. K23 bears the N6-acetyllysine mark. Residue S35 is modified to Phosphoserine. Residues Y53, 158 to 161, and G181 contribute to the NADP(+) site; that span reads SGGV. K186 carries the post-translational modification N6-acetyllysine. NADP(+) is bound by residues H200, N231, 248-251, and 271-273; these read VGCR and VSL. Position 298 is an N6-succinyllysine (K298).

Belongs to the zinc-containing alcohol dehydrogenase family. Quinone oxidoreductase subfamily. Homotetramer.

It is found in the cytoplasm. It catalyses the reaction 2 a quinone + NADPH + H(+) = 2 a 1,4-benzosemiquinone + NADP(+). In terms of biological role, does not have alcohol dehydrogenase activity. Binds NADP and acts through a one-electron transfer process. Orthoquinones, such as 1,2-naphthoquinone or 9,10-phenanthrenequinone, are the best substrates (in vitro). May act in the detoxification of xenobiotics. Interacts with (AU)-rich elements (ARE) in the 3'-UTR of target mRNA species and enhances their stability. NADPH binding interferes with mRNA binding. The polypeptide is Quinone oxidoreductase (Cryz) (Mus musculus (Mouse)).